Here is a 179-residue protein sequence, read N- to C-terminus: Bifunctional protein PyrR (179 aa).

Residues 100-112 (VILVDDVLFTGRT) carry the PRPP-binding motif.

Belongs to the purine/pyrimidine phosphoribosyltransferase family. PyrR subfamily.

It carries out the reaction UMP + diphosphate = 5-phospho-alpha-D-ribose 1-diphosphate + uracil. Regulates the transcription of the pyrimidine nucleotide (pyr) operon in response to exogenous pyrimidines. Its function is as follows. Also displays a weak uracil phosphoribosyltransferase activity which is not physiologically significant. The polypeptide is Bifunctional protein PyrR (Haemophilus influenzae (strain 86-028NP)).